The sequence spans 475 residues: Ribulose bisphosphate carboxylase large chain (475 aa).

The propeptide occupies 1–2 (MS). Pro-3 carries the post-translational modification N-acetylproline. The residue at position 14 (Lys-14) is an N6,N6,N6-trimethyllysine. Substrate contacts are provided by Asn-123 and Thr-173. Lys-175 functions as the Proton acceptor in the catalytic mechanism. Lys-177 provides a ligand contact to substrate. Mg(2+) contacts are provided by Lys-201, Asp-203, and Glu-204. N6-carboxylysine is present on Lys-201. The active-site Proton acceptor is the His-294. Residues Arg-295, His-327, and Ser-379 each coordinate substrate.

The protein belongs to the RuBisCO large chain family. Type I subfamily. Heterohexadecamer of 8 large chains and 8 small chains; disulfide-linked. The disulfide link is formed within the large subunit homodimers. Mg(2+) is required as a cofactor. The disulfide bond which can form in the large chain dimeric partners within the hexadecamer appears to be associated with oxidative stress and protein turnover.

The protein localises to the plastid. It is found in the chloroplast. It carries out the reaction 2 (2R)-3-phosphoglycerate + 2 H(+) = D-ribulose 1,5-bisphosphate + CO2 + H2O. The catalysed reaction is D-ribulose 1,5-bisphosphate + O2 = 2-phosphoglycolate + (2R)-3-phosphoglycerate + 2 H(+). RuBisCO catalyzes two reactions: the carboxylation of D-ribulose 1,5-bisphosphate, the primary event in carbon dioxide fixation, as well as the oxidative fragmentation of the pentose substrate in the photorespiration process. Both reactions occur simultaneously and in competition at the same active site. This is Ribulose bisphosphate carboxylase large chain from Cycas taitungensis (Prince sago).